Consider the following 246-residue polypeptide: Probable transcriptional regulatory protein RD1_2018 (246 aa).

The protein belongs to the TACO1 family.

The protein resides in the cytoplasm. The protein is Probable transcriptional regulatory protein RD1_2018 of Roseobacter denitrificans (strain ATCC 33942 / OCh 114) (Erythrobacter sp. (strain OCh 114)).